Reading from the N-terminus, the 1273-residue chain is Lysine-specific histone demethylase 2 (1273 aa).

The segment covering 199 to 230 (ENFFDANSPSSQQFPSTYPSRSQNPLSSSGDG) has biased composition (polar residues). The interval 199–237 (ENFFDANSPSSQQFPSTYPSRSQNPLSSSGDGSTAIHAG) is disordered. The stretch at 247–307 (FSNYPYPLDA…LSKSVDNAVL (61 aa)) forms a coiled coil. In terms of domain architecture, SWIRM spans 394-490 (AAEAARKCNL…YGCLSFDSSF (97 aa)). Residues 509–551 (IAVV…ILEA), Thr517, Glu550, Arg558, and 572–573 (TQ) each bind FAD. Residues 542 to 1198 (LPPKVIILEA…GKILRYQRLT (657 aa)) are demethylase activity. The interval 571 to 596 (ATQINHHTSNSNSISSNSTSLNPKDV) is disordered. Positions 574–590 (INHHTSNSNSISSNSTS) are enriched in low complexity. The stretch at 681–767 (SVRISWISQF…NTVDTDFSKD (87 aa)) forms a coiled coil. Positions 1115-1195 (SKPNANPFLL…AYAGKILRYQ (81 aa)) form a DNA-binding region, HMG box. FAD-binding positions include Asp1147 and 1156–1157 (ET). The segment at 1215-1273 (KCQDEPIPDDEARLFMQAQREEEQRKQTQDDNISKSREASDEEYHDDGSSDSGYNGTRY) is disordered. Basic and acidic residues predominate over residues 1233-1253 (QREEEQRKQTQDDNISKSREA). Residues 1264-1273 (SDSGYNGTRY) show a composition bias toward polar residues.

It belongs to the flavin monoamine oxidase family. As to quaternary structure, component of the SWM histone demethylase complex composed of at least lsd1, lsd2, phf1 and phf2. Interacts directly with lsd1. The cofactor is FAD.

The protein resides in the nucleus. In terms of biological role, catalytic component of the SWM histone demethylase complex that specifically demethylates H3K9me2, a specific tag for epigenetic transcriptional activation, thereby acting as a corepressor. Acts by oxidizing the substrate by FAD to generate the corresponding imine that is subsequently hydrolyzed. Has a role in regulating heterochromatin propagation and euchromatic transcription. Also has a gene activating role. The protein is Lysine-specific histone demethylase 2 (lsd2) of Schizosaccharomyces pombe (strain 972 / ATCC 24843) (Fission yeast).